A 56-amino-acid polypeptide reads, in one-letter code: Preprotein translocase subunit SecG (56 aa).

The Cytoplasmic portion of the chain corresponds to 1 to 30 (MARKDKKTLPASGAGIVRYFNDDTAGVKLS). A helical transmembrane segment spans residues 31 to 52 (PKQVVIGTIIVALICIALRFTT). Over 53–56 (SVGY) the chain is Extracellular.

This sequence belongs to the SEC61-beta family. In terms of assembly, component of the protein translocase complex. Heterotrimer consisting of alpha (SecY), beta (SecG) and gamma (SecE) subunits. Can form oligomers of the heterotrimer.

The protein localises to the cell membrane. Involved in protein export. The function of the beta subunit is unknown, but it may be involved in stabilization of the trimeric complex. The chain is Preprotein translocase subunit SecG from Methanosphaera stadtmanae (strain ATCC 43021 / DSM 3091 / JCM 11832 / MCB-3).